The following is a 393-amino-acid chain: Major outer membrane porin, serovar D (393 aa).

The N-terminal stretch at 1-22 (MKKLLKSVLVFAALSSASSLQA) is a signal peptide.

The protein belongs to the chlamydial porin (CP) (TC 1.B.2) family. In terms of assembly, part of a disulfide cross-linked outer membrane complex (COMC) composed of the major outer membrane porin (MOMP), the small cysteine-rich protein (OmcA) and the large cysteine-rich periplasmic protein (OmcB).

The protein resides in the cell outer membrane. In terms of biological role, in elementary bodies (EBs, the infectious stage, which is able to survive outside the host cell) provides the structural integrity of the outer envelope through disulfide cross-links with the small cysteine-rich protein and the large cysteine-rich periplasmic protein. It has been described in publications as the Sarkosyl-insoluble COMC (Chlamydia outer membrane complex), and serves as the functional equivalent of peptidoglycan. Permits diffusion of specific solutes through the outer membrane. This Chlamydia trachomatis serovar D (strain ATCC VR-885 / DSM 19411 / UW-3/Cx) protein is Major outer membrane porin, serovar D (ompA).